An 86-amino-acid polypeptide reads, in one-letter code: Cell division topological specificity factor (86 aa).

This sequence belongs to the MinE family.

Prevents the cell division inhibition by proteins MinC and MinD at internal division sites while permitting inhibition at polar sites. This ensures cell division at the proper site by restricting the formation of a division septum at the midpoint of the long axis of the cell. This is Cell division topological specificity factor from Shewanella loihica (strain ATCC BAA-1088 / PV-4).